A 25-amino-acid polypeptide reads, in one-letter code: C-reactive protein P2 subunit 4 (25 aa).

The Pentraxin (PTX) domain occupies 1-25; the sequence is GRSLVFPEETANSFVELFPAKELSL.

This sequence belongs to the pentraxin family. Heteropentamer. Discoid arrangement of 5 non-covalently bound subunits 1, 2, 3 and 4. The cofactor is Ca(2+). Post-translationally, glycosylated.

Its subcellular location is the secreted. Functionally, displays several functions associated with host defense: it promotes agglutination, bacterial capsular swelling, phagocytosis, and complement fixation through its calcium-dependent binding to phosphorylcholine. The sequence is that of C-reactive protein P2 subunit 4 from Gadus morhua (Atlantic cod).